The primary structure comprises 103 residues: Nucleoid-associated protein SUN_2278 (103 aa).

Belongs to the YbaB/EbfC family. As to quaternary structure, homodimer.

It localises to the cytoplasm. The protein localises to the nucleoid. Functionally, binds to DNA and alters its conformation. May be involved in regulation of gene expression, nucleoid organization and DNA protection. The polypeptide is Nucleoid-associated protein SUN_2278 (Sulfurovum sp. (strain NBC37-1)).